The chain runs to 201 residues: Large ribosomal subunit protein eL15 (201 aa).

This sequence belongs to the eukaryotic ribosomal protein eL15 family.

The polypeptide is Large ribosomal subunit protein eL15 (RPL15) (Quercus suber (Cork oak)).